Here is a 161-residue protein sequence, read N- to C-terminus: Phosphopantetheine adenylyltransferase (161 aa).

Position 9 (Ser9) interacts with substrate. ATP contacts are provided by residues Ser9 to Phe10 and His17. 3 residues coordinate substrate: Lys41, Leu73, and Arg87. ATP-binding positions include Gly88 to Arg90, Glu98, and Thr123 to Thr129.

It belongs to the bacterial CoaD family. Homohexamer. It depends on Mg(2+) as a cofactor.

The protein resides in the cytoplasm. It carries out the reaction (R)-4'-phosphopantetheine + ATP + H(+) = 3'-dephospho-CoA + diphosphate. It participates in cofactor biosynthesis; coenzyme A biosynthesis; CoA from (R)-pantothenate: step 4/5. Its function is as follows. Reversibly transfers an adenylyl group from ATP to 4'-phosphopantetheine, yielding dephospho-CoA (dPCoA) and pyrophosphate. This Psychromonas ingrahamii (strain DSM 17664 / CCUG 51855 / 37) protein is Phosphopantetheine adenylyltransferase.